A 29-amino-acid chain; its full sequence is Ceratotoxin-B (29 aa).

As to quaternary structure, homomer of four to six subunits.

It localises to the secreted. Its function is as follows. Female-specific peptides with potent activity against Gram-positive and Gram-negative bacteria. They have as well hemolytic activity. This Ceratitis capitata (Mediterranean fruit fly) protein is Ceratotoxin-B (CTXB).